The following is a 300-amino-acid chain: Free fatty acid receptor 1 (300 aa).

Residues 1–8 (MDLPPQLS) lie on the Extracellular side of the membrane. The helical transmembrane segment at 9–31 (FALYVSAFALGFPLNLLAIRGAV) threads the bilayer. The Cytoplasmic segment spans residues 32–41 (SHAKLRLTPS). The chain crosses the membrane as a helical span at residues 42-64 (LVYTLHLGCSDLLLAITLPLKAV). The Extracellular segment spans residues 65 to 79 (EALASGAWPLPLPFC). A disulfide bridge connects residues C79 and C170. The helical transmembrane segment at 80–101 (PVFALAHFAPLYAGGGFLAALS) threads the bilayer. Topologically, residues 102–121 (AGRYLGAAFPFGYQAIRRPR) are cytoplasmic. The chain crosses the membrane as a helical span at residues 122 to 142 (YSWGVCVAIWALVLCHLGLAL). Residues 143-178 (GLETSGSWLDNSTSSLGINIPVNGSPVCLEAWDPDS) lie on the Extracellular side of the membrane. Residue N153 is glycosylated (N-linked (GlcNAc...) asparagine). A helical membrane pass occupies residues 179–200 (ARPARLSFSILLFFLPLVITAF). Topologically, residues 201-223 (CYVGCLRALVRSGLSHKRKLRAA) are cytoplasmic. A helical membrane pass occupies residues 224–248 (WVAGGALLTLLLCLGPYNASNVASF). At 249-256 (INPDLGGS) the chain is on the extracellular side. Residues 257–279 (WRKLGLITGAWSVVLNPLVTGYL) traverse the membrane as a helical segment. The Cytoplasmic segment spans residues 280 to 300 (GTGPGRGTICVTRTQRGTIQK).

The protein belongs to the G-protein coupled receptor 1 family. In terms of tissue distribution, expressed in pancreatic islet beta cells (at protein level). Expressed in pancreatic islet beta cells.

The protein resides in the cell membrane. Its activity is regulated as follows. Is also activated by synthetic agonists, such as AM-8182, AM-6331 and TAK-875 (fasiglifam). AM-8182 is a full agonist, while AM-6331 and TAK-875 (fasiglifam) are partial agonists that potentiate the activity of the endogenous ligands, such as alpha-linolenic acid and gamma-linolenic acid. G-protein coupled receptor for medium and long chain saturated and unsaturated fatty acids that plays an important role in glucose homeostasis. Fatty acid binding increases glucose-stimulated insulin secretion, and may also enhance the secretion of glucagon-like peptide 1 (GLP-1). May also play a role in bone homeostasis; receptor signaling activates pathways that inhibit osteoclast differentiation. Ligand binding leads to a conformation change that triggers signaling via G-proteins that activate phospholipase C, leading to an increase of the intracellular calcium concentration. Seems to act through a G(q) and G(i)-mediated pathway. Mediates the anti-inflammatory effects of omega-3 polyunsaturated fatty acids (PUFAs) via inhibition of NLRP3 inflammasome activation. The polypeptide is Free fatty acid receptor 1 (Ffar1) (Mus musculus (Mouse)).